The following is a 486-amino-acid chain: UDP-N-acetylmuramate--L-alanine ligase (486 aa).

Residue 129–135 (GTHGKTT) participates in ATP binding.

This sequence belongs to the MurCDEF family.

The protein resides in the cytoplasm. The catalysed reaction is UDP-N-acetyl-alpha-D-muramate + L-alanine + ATP = UDP-N-acetyl-alpha-D-muramoyl-L-alanine + ADP + phosphate + H(+). It functions in the pathway cell wall biogenesis; peptidoglycan biosynthesis. Cell wall formation. This chain is UDP-N-acetylmuramate--L-alanine ligase, found in Vibrio vulnificus (strain CMCP6).